Here is a 241-residue protein sequence, read N- to C-terminus: Alpha/beta-tubulin-N-acetyltransferase 9 (241 aa).

The 148-residue stretch at Glu-34–Pro-181 folds into the N-acetyltransferase domain.

Belongs to the acetyltransferase family. GNAT subfamily.

The catalysed reaction is N-terminal L-methionyl-[tubulin] + acetyl-CoA = N-terminal N(alpha)-acetyl-L-methionyl-[tubulin] + CoA + H(+). N-acetyltransferase that mediates the acetylation of the N-terminal residues of alpha- and beta-tubulin. In Mus musculus (Mouse), this protein is Alpha/beta-tubulin-N-acetyltransferase 9 (Nat9).